A 148-amino-acid polypeptide reads, in one-letter code: UPF0540 protein At1g62000 (148 aa).

Residues M1–A21 form the signal peptide. Residues R123–S132 are compositionally biased toward low complexity. Positions R123–D148 are disordered.

This sequence belongs to the UPF0540 family.

This Arabidopsis thaliana (Mouse-ear cress) protein is UPF0540 protein At1g62000.